The sequence spans 289 residues: Trimeric intracellular cation channel type B (289 aa).

Topologically, residues 1–18 are lumenal; that stretch reads MDVFAFFNLNELAFGLSK. A helical transmembrane segment spans residues 19-36; the sequence is LPMFPYFDMAHYIISVMS. Residues 37–49 lie on the Cytoplasmic side of the membrane; the sequence is LREQPGALCVSQR. A helical membrane pass occupies residues 50–73; it reads SPLACWFSSMLYCFGGAVLSALML. The Lumenal portion of the chain corresponds to 74 to 85; the sequence is ADAPVAPLSNTT. The helical transmembrane segment at 86–103 threads the bilayer; the sequence is NLLLATLMWYLVFYCPLD. Over 104 to 107 the chain is Cytoplasmic; it reads VVYS. The chain crosses the membrane as a helical span at residues 108–125; it reads LASLLPLRLVLTAMKEVT. A 1,2-diacyl-sn-glycero-3-phospho-(1D-myo-inositol-4,5-bisphosphate)-binding residues include K122 and R126. Topologically, residues 126–144 are lumenal; that stretch reads RTWKVLSGVSQAGSKYSDA. The chain crosses the membrane as a helical span at residues 145-162; sequence LFVMVAVGWAKGAGGGLI. Over 163-183 the chain is Cytoplasmic; it reads SNFEQLVRGVWKPETNELLKM. Residues 184–201 form a helical membrane-spanning segment; it reads SYPTKVTLLGAVVFSLQQ. Topologically, residues 202–210 are lumenal; that stretch reads CRYLPIQTH. A helical membrane pass occupies residues 211–230; that stretch reads HLTFIYTLFTVTNKTRMMLL. The Cytoplasmic portion of the chain corresponds to 231–289; sequence GSSSHPLSSLESFLYKTLFVRPLTDLSAEHTHSKHNGSVPEPTTAQTHTKEAEASKKTN. Positions 260–289 are disordered; the sequence is HTHSKHNGSVPEPTTAQTHTKEAEASKKTN. Basic and acidic residues predominate over residues 278–289; that stretch reads HTKEAEASKKTN.

The protein belongs to the TMEM38 family. Homotrimer; conformation seems to be controled by binding to diacylglycerol (DAG).

The protein localises to the endoplasmic reticulum membrane. It carries out the reaction K(+)(in) = K(+)(out). With respect to regulation, channel activity is activated by increased cytosolic Ca(2+) levels and blocked by luminal high Ca(2+) levels. Functionally, intracellular monovalent cation channel required for maintenance of rapid intracellular calcium release. Acts as a potassium counter-ion channel that functions in synchronization with calcium release from intracellular stores. Activated by increased cytosolic Ca(2+) levels. The sequence is that of Trimeric intracellular cation channel type B (tmem38b) from Danio rerio (Zebrafish).